We begin with the raw amino-acid sequence, 179 residues long: Cytoglobin-2 (179 aa).

Positions 18–167 (PLSDAEMEII…VYWHVTGAYT (150 aa)) constitute a Globin domain. 2 residues coordinate heme b: His81 and His113.

Belongs to the globin family. In terms of assembly, monomeric.

It is found in the cytoplasm. It localises to the nucleus. It carries out the reaction Fe(II)-heme b-[protein] + nitric oxide + O2 = Fe(III)-heme b-[protein] + nitrate. The catalysed reaction is Fe(III)-heme b-[protein] + nitric oxide + H2O = Fe(II)-heme b-[protein] + nitrite + 2 H(+). The enzyme catalyses 2 superoxide + 2 H(+) = H2O2 + O2. It catalyses the reaction H2O2 + AH2 = A + 2 H2O. Probable multifunctional globin with a hexacoordinated heme iron required for the catalysis of various reactions depending on redox condition of the cell as well as oxygen availability. Has a nitric oxide dioxygenase (NOD) activity and is most probably involved in cell-mediated and oxygen-dependent nitric oxide consumption. Under normoxic conditions functions as a nitric oxide dioxygenase (NOD) but under hypoxic conditions the globin may switch its function to that of a nitrite (NO2) reductase (NiR), generating nitric oxide. Could also have peroxidase and superoxide dismutase activities, detoxifying reactive oxygen species and protecting cells against oxidative stress. Also binds dioxygen with low affinity and could function as an oxygen sensor but has probably no function as a respiratory oxygen carrier. This Oryzias latipes (Japanese rice fish) protein is Cytoglobin-2.